The chain runs to 940 residues: UvrABC system protein A (940 aa).

31–38 serves as a coordination point for ATP; that stretch reads GLSGSGKS. The segment at 253-280 adopts a C4-type zinc-finger fold; that stretch reads CPICGYSMRELEPRLFSFNNPAGACPTC. 2 ABC transporter domains span residues 310-587 and 607-937; these read WDRR…PESL and ANPE…RFLK. 640 to 647 lines the ATP pocket; that stretch reads GVSGSGKS. Residues 740–766 form a C4-type zinc finger; that stretch reads CEACQGDGVIKVEMHFLPDIYVPCDQC.

Belongs to the ABC transporter superfamily. UvrA family. Forms a heterotetramer with UvrB during the search for lesions.

The protein resides in the cytoplasm. Functionally, the UvrABC repair system catalyzes the recognition and processing of DNA lesions. UvrA is an ATPase and a DNA-binding protein. A damage recognition complex composed of 2 UvrA and 2 UvrB subunits scans DNA for abnormalities. When the presence of a lesion has been verified by UvrB, the UvrA molecules dissociate. Plays a role in recovery after DNA ADP-ribosylation. The protein is UvrABC system protein A of Escherichia coli O127:H6 (strain E2348/69 / EPEC).